A 267-amino-acid polypeptide reads, in one-letter code: Protein BMH1 (267 aa).

The residue at position 2 (S2) is an N-acetylserine. A Glycyl lysine isopeptide (Lys-Gly) (interchain with G-Cter in ubiquitin) cross-link involves residue K76. S89 carries the phosphoserine modification. The tract at residues 236–267 (DMSESGQAEDQQQQQQHQQQQPPAAAEGEAPK) is disordered. Positions 243 to 267 (AEDQQQQQQHQQQQPPAAAEGEAPK) are enriched in low complexity.

The protein belongs to the 14-3-3 family. As to quaternary structure, homodimer. Interacts with NTH1 (via N-terminus when phosphorylated by PKA); the interaction is direct and activates NTH1. Interacts with FIN1.

Functionally, involved in growth regulation. In Saccharomyces cerevisiae (strain ATCC 204508 / S288c) (Baker's yeast), this protein is Protein BMH1 (BMH1).